The chain runs to 335 residues: Taste receptor type 2 member 119 (335 aa).

Over 1–7 the chain is Extracellular; that stretch reads MMEGHIL. Residues 8 to 28 traverse the membrane as a helical segment; it reads FFFLVVMVQFVTGVLANGLIV. Over 29 to 43 the chain is Cytoplasmic; the sequence is VVHAIDLIMWKKMAP. The helical transmembrane segment at 44–64 threads the bilayer; sequence LDLLLFCLATSRIILQLCILF. The Extracellular segment spans residues 65-81; that stretch reads AQLCLFSLVRHTLFEDN. N-linked (GlcNAc...) asparagine glycosylation is present at asparagine 81. Residues 82-102 traverse the membrane as a helical segment; sequence ITFVFIINELSLWFATWLGVF. Topologically, residues 103 to 124 are cytoplasmic; sequence YCAKIATIPHPLFLWLKMRISR. Residues 125–145 traverse the membrane as a helical segment; it reads LVPWLILGSVLYVIITTFIHS. Residues 146-176 lie on the Extracellular side of the membrane; it reads RETSAILKPIFISLFPKNATQVGTGHATLLS. A glycan (N-linked (GlcNAc...) asparagine) is linked at asparagine 163. Residues 177 to 197 traverse the membrane as a helical segment; sequence VLVLGLTLPLFIFTVAVLLLI. The Cytoplasmic portion of the chain corresponds to 198–224; it reads YSLWNYSRQMRTMVGTREYSGHAHISA. Residues 225–245 form a helical membrane-spanning segment; that stretch reads MLSILSFLILYLSHYMVAVLI. Residues 246–256 lie on the Extracellular side of the membrane; sequence STQVLYLGSRT. The helical transmembrane segment at 257–277 threads the bilayer; it reads FVFCLLVIGMYPSIHSIVLIL. Topologically, residues 278-335 are cytoplasmic; the sequence is GNPKLKRNAKMFIVHCKCCHCTRAWVTSRSPRLSDLPVPPTHPSANKTSCSEACIMPS. Positions 308–327 are disordered; it reads PRLSDLPVPPTHPSANKTSC.

This sequence belongs to the G-protein coupled receptor T2R family. As to expression, expressed in subsets of taste receptor cells of the tongue and palate epithelium and exclusively in gustducin-positive cells. Expressed in the duodenum, antrum and fundus (part of the stomach).

It is found in the membrane. Its function is as follows. Gustducin-coupled receptor implicated in the perception of bitter compounds in the oral cavity and the gastrointestinal tract. Signals through PLCB2 and the calcium-regulated cation channel TRPM5. This Rattus norvegicus (Rat) protein is Taste receptor type 2 member 119 (Tas2r119).